A 184-amino-acid chain; its full sequence is Large ribosomal subunit protein uL5c (184 aa).

The protein belongs to the universal ribosomal protein uL5 family. As to quaternary structure, part of the 50S ribosomal subunit; contacts the 5S rRNA.

The protein resides in the plastid. The protein localises to the chloroplast. Functionally, binds 5S rRNA, forms part of the central protuberance of the 50S subunit. In Zygnema circumcarinatum (Green alga), this protein is Large ribosomal subunit protein uL5c (rpl5).